A 608-amino-acid chain; its full sequence is Aspartate--tRNA(Asp/Asn) ligase (608 aa).

Residue Glu-187 coordinates L-aspartate. Residues 211–214 (QQFK) are aspartate. The L-aspartate site is built by Arg-233 and His-461. 233-235 (RDE) provides a ligand contact to ATP. Glu-495 contacts ATP. An L-aspartate-binding site is contributed by Arg-502. 547–550 (GLDR) lines the ATP pocket.

The protein belongs to the class-II aminoacyl-tRNA synthetase family. Type 1 subfamily. In terms of assembly, homodimer.

It localises to the cytoplasm. It carries out the reaction tRNA(Asx) + L-aspartate + ATP = L-aspartyl-tRNA(Asx) + AMP + diphosphate. Its function is as follows. Aspartyl-tRNA synthetase with relaxed tRNA specificity since it is able to aspartylate not only its cognate tRNA(Asp) but also tRNA(Asn). Reaction proceeds in two steps: L-aspartate is first activated by ATP to form Asp-AMP and then transferred to the acceptor end of tRNA(Asp/Asn). The chain is Aspartate--tRNA(Asp/Asn) ligase from Chlorobium phaeobacteroides (strain BS1).